The following is a 471-amino-acid chain: Ribulose bisphosphate carboxylase large chain (471 aa).

2 residues coordinate substrate: N115 and T165. Catalysis depends on K167, which acts as the Proton acceptor. K169 provides a ligand contact to substrate. Positions 193, 195, and 196 each coordinate Mg(2+). Position 193 is an N6-carboxylysine (K193). H286 functions as the Proton acceptor in the catalytic mechanism. The substrate site is built by R287, H319, and S371.

This sequence belongs to the RuBisCO large chain family. Type I subfamily. In terms of assembly, heterohexadecamer of 8 large chains and 8 small chains. Mg(2+) is required as a cofactor.

It localises to the carboxysome. It carries out the reaction 2 (2R)-3-phosphoglycerate + 2 H(+) = D-ribulose 1,5-bisphosphate + CO2 + H2O. It catalyses the reaction D-ribulose 1,5-bisphosphate + O2 = 2-phosphoglycolate + (2R)-3-phosphoglycerate + 2 H(+). Functionally, ruBisCO catalyzes two reactions: the carboxylation of D-ribulose 1,5-bisphosphate, the primary event in carbon dioxide fixation, as well as the oxidative fragmentation of the pentose substrate in the photorespiration process. Both reactions occur simultaneously and in competition at the same active site. This is Ribulose bisphosphate carboxylase large chain from Prochlorococcus marinus (strain MIT 9301).